Reading from the N-terminus, the 458-residue chain is Cysteine--tRNA ligase (458 aa).

Cysteine 29 is a Zn(2+) binding site. Residues 31-41 (MTVYDLCHLGH) carry the 'HIGH' region motif. Zn(2+) contacts are provided by cysteine 213, histidine 238, and glutamate 242. A 'KMSKS' region motif is present at residues 270–274 (KMSKS). ATP is bound at residue lysine 273.

Belongs to the class-I aminoacyl-tRNA synthetase family. As to quaternary structure, monomer. It depends on Zn(2+) as a cofactor.

It localises to the cytoplasm. The catalysed reaction is tRNA(Cys) + L-cysteine + ATP = L-cysteinyl-tRNA(Cys) + AMP + diphosphate. This Acidovorax sp. (strain JS42) protein is Cysteine--tRNA ligase.